A 286-amino-acid polypeptide reads, in one-letter code: ATP synthase gamma chain (286 aa).

The protein belongs to the ATPase gamma chain family. As to quaternary structure, F-type ATPases have 2 components, CF(1) - the catalytic core - and CF(0) - the membrane proton channel. CF(1) has five subunits: alpha(3), beta(3), gamma(1), delta(1), epsilon(1). CF(0) has three main subunits: a, b and c.

It is found in the cell inner membrane. In terms of biological role, produces ATP from ADP in the presence of a proton gradient across the membrane. The gamma chain is believed to be important in regulating ATPase activity and the flow of protons through the CF(0) complex. In Teredinibacter turnerae (strain ATCC 39867 / T7901), this protein is ATP synthase gamma chain.